The primary structure comprises 598 residues: Arginine--tRNA ligase (598 aa).

The short motif at 140–150 is the 'HIGH' region element; the sequence is ANPTGPLHVGH.

Belongs to the class-I aminoacyl-tRNA synthetase family. Monomer.

It is found in the cytoplasm. It carries out the reaction tRNA(Arg) + L-arginine + ATP = L-arginyl-tRNA(Arg) + AMP + diphosphate. The polypeptide is Arginine--tRNA ligase (Synechococcus sp. (strain JA-3-3Ab) (Cyanobacteria bacterium Yellowstone A-Prime)).